A 203-amino-acid chain; its full sequence is Transcriptional regulator GfcR (203 aa).

It belongs to the purine/pyrimidine phosphoribosyltransferase family. GfcR subfamily.

The sequence is that of Transcriptional regulator GfcR from Methanothrix thermoacetophila (strain DSM 6194 / JCM 14653 / NBRC 101360 / PT) (Methanosaeta thermophila).